The chain runs to 143 residues: Large ribosomal subunit protein uL11 (143 aa).

Belongs to the universal ribosomal protein uL11 family. Part of the ribosomal stalk of the 50S ribosomal subunit. Interacts with L10 and the large rRNA to form the base of the stalk. L10 forms an elongated spine to which L12 dimers bind in a sequential fashion forming a multimeric L10(L12)X complex. In terms of processing, one or more lysine residues are methylated.

Its function is as follows. Forms part of the ribosomal stalk which helps the ribosome interact with GTP-bound translation factors. The chain is Large ribosomal subunit protein uL11 from Burkholderia multivorans (strain ATCC 17616 / 249).